A 194-amino-acid chain; its full sequence is RNA polymerase II subunit A C-terminal domain phosphatase SSU72 like protein 6 (194 aa).

It belongs to the SSU72 phosphatase family.

The protein localises to the nucleus. It catalyses the reaction O-phospho-L-seryl-[protein] + H2O = L-seryl-[protein] + phosphate. The enzyme catalyses O-phospho-L-threonyl-[protein] + H2O = L-threonyl-[protein] + phosphate. In terms of biological role, protein phosphatase that catalyzes the dephosphorylation of the C-terminal domain of RNA polymerase II. Plays a role in RNA processing and termination. This chain is RNA polymerase II subunit A C-terminal domain phosphatase SSU72 like protein 6, found in Homo sapiens (Human).